A 2715-amino-acid polypeptide reads, in one-letter code: G surface protein, allelic form 156 (2715 aa).

An N-terminal signal peptide occupies residues 1 to 20 (MNNKFIIFSLLLALVASQTY). PSA repeat units lie at residues 111–171 (KTLD…NTCD), 177–237 (FATD…RICD), 243–303 (LTTD…KACA), 309–366 (IATN…KTCA), 372–404 (NNTH…APTT), 405–467 (MTTN…KTCV), 473–530 (NTTH…KQCV), 536–596 (TTTH…KACS), 602–673 (FTTT…KSCA), 688–748 (GFTF…KTCA), 752–812 (QTTH…ATCA), 820–895 (YDSD…GACT), 934–1001 (GLTF…AECA), 1008–1067 (GLDH…SNCA), 1073–1141 (GLTT…THCP), 1147–1215 (GLTD…TECA), 1221–1289 (GLTD…TECA), 1295–1363 (GLTN…TECA), 1369–1437 (GLTN…TECA), 1443–1507 (GLTK…LNCS), 1513–1578 (GFVH…TDCA), 1586–1652 (TITF…ATCD), 1693–1751 (TFNH…KTCD), 1759–1819 (RDDD…LNCG), 1827–1898 (YDTH…KSCT), 1904–1976 (TTTH…KSCA), 1984–2044 (YDDD…KSCD), 2080–2149 (FATD…KNCS), 2155–2215 (LTSE…KDCQ), 2219–2286 (GTTH…TSCK), 2290–2355 (WNND…TSCA), 2359–2430 (YTTH…QSCA), 2434–2500 (GTTH…LTCA), and 2505–2573 (GTAT…TACT).

The protein resides in the cell membrane. In terms of biological role, this protein is the surface antigen or immobilization antigen of Paramecium primaurelia. This is G surface protein, allelic form 156 (156G) from Paramecium primaurelia.